We begin with the raw amino-acid sequence, 345 residues long: N-acetyl-gamma-glutamyl-phosphate reductase (345 aa).

The active site involves Cys149.

It belongs to the NAGSA dehydrogenase family. Type 1 subfamily.

It is found in the cytoplasm. It catalyses the reaction N-acetyl-L-glutamate 5-semialdehyde + phosphate + NADP(+) = N-acetyl-L-glutamyl 5-phosphate + NADPH + H(+). It functions in the pathway amino-acid biosynthesis; L-arginine biosynthesis; N(2)-acetyl-L-ornithine from L-glutamate: step 3/4. Its function is as follows. Catalyzes the NADPH-dependent reduction of N-acetyl-5-glutamyl phosphate to yield N-acetyl-L-glutamate 5-semialdehyde. This Geobacillus stearothermophilus (Bacillus stearothermophilus) protein is N-acetyl-gamma-glutamyl-phosphate reductase.